We begin with the raw amino-acid sequence, 355 residues long: Protein RecA (355 aa).

Residue 67–74 (GPESSGKT) participates in ATP binding.

It belongs to the RecA family.

It localises to the cytoplasm. Can catalyze the hydrolysis of ATP in the presence of single-stranded DNA, the ATP-dependent uptake of single-stranded DNA by duplex DNA, and the ATP-dependent hybridization of homologous single-stranded DNAs. It interacts with LexA causing its activation and leading to its autocatalytic cleavage. This chain is Protein RecA, found in Shewanella baltica (strain OS223).